Reading from the N-terminus, the 259-residue chain is Small ribosomal subunit protein uS2 (259 aa).

The tract at residues 228–259 (VSFGSEEAEENNQKEDNEEIFEIEDVDESEEM) is disordered. Acidic residues predominate over residues 233 to 259 (EEAEENNQKEDNEEIFEIEDVDESEEM).

Belongs to the universal ribosomal protein uS2 family.

This Thermosipho africanus (strain TCF52B) protein is Small ribosomal subunit protein uS2.